The sequence spans 324 residues: MKRVNVFRSGVFSRLFALLLPFLLGINGLVYASAEAPAEAVHAEAAAHAEGGHESAGDVIMHHILDTGVMSFEPFGEVHLPQIVIGGFDISITRHVVMMWIASAILLVVFLLVGNRYKTMTSRQAPGGMANAMEALVEFIRLDVAKSNIGAGYEKHLPYLLTVFAFILLLNLLGLVPYGATATGNINVTLTLAVFTFFITQVASLKAHGIKGYLAHLTAGTHWALWIIMIPIEIIGLFTKPFALTVRLFANMTAGHIVILSLIFISFILKSYIVAMFVSVPFSIFIYLLEIFVAFLQAFIFTMLSALFIGLATAHEGHEGEAAH.

An N-terminal signal peptide occupies residues 1 to 33 (MKRVNVFRSGVFSRLFALLLPFLLGINGLVYAS). A run of 6 helical transmembrane segments spans residues 95–115 (HVVM…LVGN), 157–177 (LPYL…GLVP), 179–199 (GATA…TFFI), 224–244 (ALWI…PFAL), 257–277 (IVIL…VAMF), and 291–311 (IFVA…FIGL).

The protein belongs to the ATPase A chain family. As to quaternary structure, F-type ATPases have 2 components, CF(1) - the catalytic core - and CF(0) - the membrane proton channel. CF(1) has five subunits: alpha(3), beta(3), gamma(1), delta(1), epsilon(1). CF(0) has four main subunits: a, b, b' and c.

The protein resides in the cell inner membrane. In terms of biological role, key component of the proton channel; it plays a direct role in the translocation of protons across the membrane. The protein is ATP synthase subunit a 2 of Prosthecochloris aestuarii (strain DSM 271 / SK 413).